Reading from the N-terminus, the 317-residue chain is Methionyl-tRNA formyltransferase (317 aa).

Residue 112–115 coordinates (6S)-5,6,7,8-tetrahydrofolate; that stretch reads SLLP.

The protein belongs to the Fmt family.

The catalysed reaction is L-methionyl-tRNA(fMet) + (6R)-10-formyltetrahydrofolate = N-formyl-L-methionyl-tRNA(fMet) + (6S)-5,6,7,8-tetrahydrofolate + H(+). Its function is as follows. Attaches a formyl group to the free amino group of methionyl-tRNA(fMet). The formyl group appears to play a dual role in the initiator identity of N-formylmethionyl-tRNA by promoting its recognition by IF2 and preventing the misappropriation of this tRNA by the elongation apparatus. The protein is Methionyl-tRNA formyltransferase of Mycobacterium avium (strain 104).